The sequence spans 124 residues: Fluoride-specific ion channel FluC 1 (124 aa).

The next 4 helical transmembrane spans lie at 7 to 27 (IQSK…LGAI), 32 to 52 (LNNY…IVGL), 58 to 78 (IQFF…GWIL), and 93 to 113 (AGLI…TFWI). Na(+) is bound by residues glycine 68 and threonine 71.

The protein belongs to the fluoride channel Fluc/FEX (TC 1.A.43) family.

It localises to the cell inner membrane. It catalyses the reaction fluoride(in) = fluoride(out). Na(+) is not transported, but it plays an essential structural role and its presence is essential for fluoride channel function. In terms of biological role, fluoride-specific ion channel. Important for reducing fluoride concentration in the cell, thus reducing its toxicity. In Prochlorococcus marinus (strain SARG / CCMP1375 / SS120), this protein is Fluoride-specific ion channel FluC 1.